Consider the following 94-residue polypeptide: Large ribosomal subunit protein uL23 (94 aa).

It belongs to the universal ribosomal protein uL23 family. Part of the 50S ribosomal subunit. Contacts protein L29, and trigger factor when it is bound to the ribosome.

One of the early assembly proteins it binds 23S rRNA. One of the proteins that surrounds the polypeptide exit tunnel on the outside of the ribosome. Forms the main docking site for trigger factor binding to the ribosome. The chain is Large ribosomal subunit protein uL23 from Treponema pallidum (strain Nichols).